Here is a 266-residue protein sequence, read N- to C-terminus: MRKNTYAMRYVAGQPAERILPPRSFASIGQALPAGEPLSSEERIRILVWNIFKQQRAEWLSVLKNYGKDAHLVLLQEAQTTPELVQFATANYLAADQVPAFVLPQHPSGVMTLSAAHPVYCCPLREREPILRLAKSALVTVYPLPDTRLLMVVNVHAVNFSLGVDVYSKQLLPIGDQIAHHSGPVIMAGDFNAWSRPRMNALYRFAREMSLRQVRFTDDQRRRAFGRPLDFVFYRGLNVNEASVLVTRASDHNPLLVEFSPGKPEQ.

This sequence belongs to the UPF0294 family.

Its subcellular location is the cytoplasm. This is UPF0294 protein YafD from Salmonella dublin (strain CT_02021853).